The sequence spans 845 residues: Complement component C7 (845 aa).

The signal sequence occupies residues 1–22 (MQVTSLLILVCFIAAFQVFSRA). The 54-residue stretch at 27-80 (NCKWDSYGPWSECNGCTKTQTRRRSVAVYGQYGGYPCEGSAFETQSCKPERGCP) folds into the TSP type-1 1 domain. Intrachain disulfides connect C28-C63, C39-C73, C42-C79, C85-C96, C91-C109, and C103-C119. The LDL-receptor class A domain maps to 84-120 (GCGDRFRCFSGQCISKSLVCNGDPDCEEDGADEDKCE). In terms of domain architecture, MACPF spans 122 to 456 (VANPSCNIDK…EYFDEFDPCH (335 aa)). N124 carries an N-linked (GlcNAc...) asparagine glycan. A disulfide bond links C127 and C164. N201 carries N-linked (GlcNAc...) asparagine glycosylation. 21 cysteine pairs are disulfide-bonded: C336–C353, C433–C560, C455–C505, C457–C473, C460–C475, C477–C486, C512–C545, C523–C535, C571–C613, C599–C626, C631–C673, C659–C688, C703–C714, C716–C751, C722–C744, C729–C764, C774–C783, C777–C790, C792–C826, C798–C819, and C806–C839. The EGF-like domain occupies 457–487 (CRPCQNGGLAIVVETQCQCLCKPYTFGSACE). Positions 500–549 (DGGWNCWSSWSPCVQGKRTRSRECNNPPPRDDGKSCLGETTESKQCEDQD) constitute a TSP type-1 2 domain. 2 CCP regions span residues 545–615 (CEDQ…RCGE) and 616–693 (DLQW…QKAT). 2 Sushi domains span residues 569-628 (EFCL…HCQK) and 629-690 (LACV…KCVQ). Factor I module (FIM) regions lie at residues 695-771 (TPPP…SPAE) and 772-844 (KVCG…EEAA). N755 carries an N-linked (GlcNAc...) asparagine glycan.

This sequence belongs to the complement C6/C7/C8/C9 family. As to quaternary structure, monomer or dimer; as a C5b-7 complex it can also form multimeric rosettes. Component of the membrane attack complex (MAC), composed of complement C5b, C6, C7, C8A, C8B, C8G and multiple copies of the pore-forming subunit C9. Post-translationally, C-, N- and O-glycosylated. O-glycosylated with core 1 or possibly core 8 glycans.

It is found in the secreted. The protein resides in the target cell membrane. Membrane attack complex (MAC) assembly is inhibited by CD59, thereby protecting self-cells from damage during complement activation. MAC assembly is also inhibited by clusterin (CLU) chaperones that inhibit polymerization of C9. Component of the membrane attack complex (MAC), a multiprotein complex activated by the complement cascade, which inserts into a target cell membrane and forms a pore, leading to target cell membrane rupture and cell lysis. The MAC is initiated by proteolytic cleavage of C5 into complement C5b in response to the classical, alternative, lectin and GZMK complement pathways. The complement pathways consist in a cascade of proteins that leads to phagocytosis and breakdown of pathogens and signaling that strengthens the adaptive immune system. C7 serves as a membrane anchor. During MAC assembly, associates with C5b and C6 to form the C5b-7 complex, a key lipophilic precursor of the MAC complex, which associates with the outer leaflet and reduces the energy for membrane bending. In Mus musculus (Mouse), this protein is Complement component C7.